The chain runs to 365 residues: uncharacterized protein (365 aa).

29-36 (GPLNSGKS) lines the ATP pocket.

Belongs to the archaeal ATPase family.

This is an uncharacterized protein from Methanocaldococcus jannaschii (strain ATCC 43067 / DSM 2661 / JAL-1 / JCM 10045 / NBRC 100440) (Methanococcus jannaschii).